Consider the following 303-residue polypeptide: Agmatinase (303 aa).

The Mn(2+) site is built by H126, D149, H151, D153, D230, and D232.

The protein belongs to the arginase family. Agmatinase subfamily. Mn(2+) serves as cofactor.

The enzyme catalyses agmatine + H2O = urea + putrescine. Catalyzes the formation of putrescine from agmatine. The sequence is that of Agmatinase (speB) from Blochmanniella floridana.